Here is a 464-residue protein sequence, read N- to C-terminus: Bifunctional protein GlmU (464 aa).

Residues 1-236 (MRAVILAAGL…PTEALGVNTR (236 aa)) are pyrophosphorylase. UDP-N-acetyl-alpha-D-glucosamine contacts are provided by residues 6–9 (LAAG), Lys20, and 77–78 (GT). Asp102 is a Mg(2+) binding site. Residues Gly145, Glu161, Asn176, and Asn234 each contribute to the UDP-N-acetyl-alpha-D-glucosamine site. Asn234 serves as a coordination point for Mg(2+). Positions 237-257 (WDLALVENVIKLKIARYWAER) are linker. Positions 258-464 (GVTVHYPETV…GRGKKKLQKD (207 aa)) are N-acetyltransferase. 2 residues coordinate UDP-N-acetyl-alpha-D-glucosamine: Arg340 and Lys358. Residue His370 is the Proton acceptor of the active site. UDP-N-acetyl-alpha-D-glucosamine-binding residues include Tyr373 and Asn384. Residues Ala387, 393-394 (NY), Ser412, Gly430, and Arg447 each bind acetyl-CoA.

The protein in the N-terminal section; belongs to the N-acetylglucosamine-1-phosphate uridyltransferase family. It in the C-terminal section; belongs to the transferase hexapeptide repeat family. In terms of assembly, homotrimer. The cofactor is Mg(2+).

Its subcellular location is the cytoplasm. The catalysed reaction is alpha-D-glucosamine 1-phosphate + acetyl-CoA = N-acetyl-alpha-D-glucosamine 1-phosphate + CoA + H(+). It catalyses the reaction N-acetyl-alpha-D-glucosamine 1-phosphate + UTP + H(+) = UDP-N-acetyl-alpha-D-glucosamine + diphosphate. The protein operates within nucleotide-sugar biosynthesis; UDP-N-acetyl-alpha-D-glucosamine biosynthesis; N-acetyl-alpha-D-glucosamine 1-phosphate from alpha-D-glucosamine 6-phosphate (route II): step 2/2. It participates in nucleotide-sugar biosynthesis; UDP-N-acetyl-alpha-D-glucosamine biosynthesis; UDP-N-acetyl-alpha-D-glucosamine from N-acetyl-alpha-D-glucosamine 1-phosphate: step 1/1. Its pathway is bacterial outer membrane biogenesis; LPS lipid A biosynthesis. In terms of biological role, catalyzes the last two sequential reactions in the de novo biosynthetic pathway for UDP-N-acetylglucosamine (UDP-GlcNAc). The C-terminal domain catalyzes the transfer of acetyl group from acetyl coenzyme A to glucosamine-1-phosphate (GlcN-1-P) to produce N-acetylglucosamine-1-phosphate (GlcNAc-1-P), which is converted into UDP-GlcNAc by the transfer of uridine 5-monophosphate (from uridine 5-triphosphate), a reaction catalyzed by the N-terminal domain. The polypeptide is Bifunctional protein GlmU (Aquifex aeolicus (strain VF5)).